The following is a 350-amino-acid chain: Xylene/toluene monooxygenase electron transfer component XylA (350 aa).

The region spanning 16 to 108 (PESTVSVRGQ…DLEIELDTVL (93 aa)) is the 2Fe-2S ferredoxin-type domain. Positions 52, 57, 60, and 92 each coordinate [2Fe-2S] cluster. Residues 109–350 (GQALVPIETS…ADRFYNRPPC (242 aa)) form a ferredoxin--NADH reductase region. The region spanning 114 to 213 (PIETSALISK…RAPYGQFGLH (100 aa)) is the FAD-binding FR-type domain.

This sequence belongs to the bacterial ring-hydroxylating dioxygenase ferredoxin reductase family. Monomer. The xylene/toluene monooxygenase is composed of two subunits: the electron transfer component XylA and the hydroxylase component XylM. The cofactor is FAD. [2Fe-2S] cluster serves as cofactor.

It localises to the cell inner membrane. The enzyme catalyses 2 reduced [2Fe-2S]-[ferredoxin] + NAD(+) + H(+) = 2 oxidized [2Fe-2S]-[ferredoxin] + NADH. The reductase activity is completely inhibited by quercetin (a common inhibitor of mammalian oxidoreductases) and p-chloromercuribenzoate, but not by iodoacetimide, N-ethylmaleimide and pyrrazole. Functionally, component of a monooxygenase that catalyzes the first step in the degradation of xylenes and toluenes. XylA is responsible for the transport of electrons from the electron donor NADH to the terminal hydroxylase component, XylM. This Pseudomonas putida (Arthrobacter siderocapsulatus) protein is Xylene/toluene monooxygenase electron transfer component XylA.